Consider the following 232-residue polypeptide: Ribosomal RNA small subunit methyltransferase G (232 aa).

S-adenosyl-L-methionine-binding positions include Gly-93, Leu-98, 144 to 145 (VE), and Arg-163.

This sequence belongs to the methyltransferase superfamily. RNA methyltransferase RsmG family.

Its subcellular location is the cytoplasm. The catalysed reaction is guanosine(527) in 16S rRNA + S-adenosyl-L-methionine = N(7)-methylguanosine(527) in 16S rRNA + S-adenosyl-L-homocysteine. Functionally, specifically methylates the N7 position of guanine in position 527 of 16S rRNA. This Burkholderia pseudomallei (strain 668) protein is Ribosomal RNA small subunit methyltransferase G.